We begin with the raw amino-acid sequence, 283 residues long: Polyamine aminopropyltransferase (283 aa).

Residues 2 to 237 enclose the PABS domain; that stretch reads ELWYTEEHTD…GHWLFGFASK (236 aa). Glutamine 31 contributes to the S-methyl-5'-thioadenosine binding site. Residues histidine 62 and aspartate 86 each coordinate spermidine. S-methyl-5'-thioadenosine-binding positions include glutamate 106 and 137 to 138; that span reads DG. Aspartate 155 acts as the Proton acceptor in catalysis. 155-158 contacts spermidine; the sequence is DSTD. Proline 162 provides a ligand contact to S-methyl-5'-thioadenosine.

It belongs to the spermidine/spermine synthase family. Homodimer or homotetramer.

The protein localises to the cytoplasm. The enzyme catalyses S-adenosyl 3-(methylsulfanyl)propylamine + putrescine = S-methyl-5'-thioadenosine + spermidine + H(+). Its pathway is amine and polyamine biosynthesis; spermidine biosynthesis; spermidine from putrescine: step 1/1. Catalyzes the irreversible transfer of a propylamine group from the amino donor S-adenosylmethioninamine (decarboxy-AdoMet) to putrescine (1,4-diaminobutane) to yield spermidine. This Clostridium perfringens (strain 13 / Type A) protein is Polyamine aminopropyltransferase.